A 155-amino-acid polypeptide reads, in one-letter code: Myosin light chain alkali (155 aa).

2 consecutive EF-hand domains span residues 7–41 (REIENVEFVFEVMGSAGEGIDAVDLGDALRALNLN) and 80–115 (GCYEDFIECLKLYDKEENGTMMLAELQHALLALGES).

In terms of assembly, myosin is a hexamer of 2 heavy chains and 4 light chains.

The polypeptide is Myosin light chain alkali (Mlc1) (Drosophila pseudoobscura pseudoobscura (Fruit fly)).